The following is a 168-amino-acid chain: Photosystem I assembly protein Ycf3 (168 aa).

TPR repeat units follow at residues 35–68 (AFTY…EIDP), 72–105 (SYIL…NPFL), and 120–153 (GEQA…TPGN).

Belongs to the Ycf3 family. In terms of assembly, interacts with Y3IP1.

It is found in the plastid. The protein localises to the chloroplast thylakoid membrane. Its function is as follows. Essential for the assembly of the photosystem I (PSI) complex. May act as a chaperone-like factor to guide the assembly of the PSI subunits. The sequence is that of Photosystem I assembly protein Ycf3 from Arabidopsis thaliana (Mouse-ear cress).